The following is a 258-amino-acid chain: Indole-3-glycerol phosphate synthase (258 aa).

This sequence belongs to the TrpC family.

The enzyme catalyses 1-(2-carboxyphenylamino)-1-deoxy-D-ribulose 5-phosphate + H(+) = (1S,2R)-1-C-(indol-3-yl)glycerol 3-phosphate + CO2 + H2O. The protein operates within amino-acid biosynthesis; L-tryptophan biosynthesis; L-tryptophan from chorismate: step 4/5. This Chlorobium phaeobacteroides (strain DSM 266 / SMG 266 / 2430) protein is Indole-3-glycerol phosphate synthase.